Here is a 561-residue protein sequence, read N- to C-terminus: Arginine--tRNA ligase (561 aa).

Positions 129 to 139 (ANPTGPLHIGH) match the 'HIGH' region motif.

The protein belongs to the class-I aminoacyl-tRNA synthetase family. As to quaternary structure, monomer.

Its subcellular location is the cytoplasm. The enzyme catalyses tRNA(Arg) + L-arginine + ATP = L-arginyl-tRNA(Arg) + AMP + diphosphate. This is Arginine--tRNA ligase from Geotalea daltonii (strain DSM 22248 / JCM 15807 / FRC-32) (Geobacter daltonii).